The sequence spans 80 residues: Exodeoxyribonuclease 7 small subunit (80 aa).

The protein belongs to the XseB family. In terms of assembly, heterooligomer composed of large and small subunits.

The protein resides in the cytoplasm. It catalyses the reaction Exonucleolytic cleavage in either 5'- to 3'- or 3'- to 5'-direction to yield nucleoside 5'-phosphates.. In terms of biological role, bidirectionally degrades single-stranded DNA into large acid-insoluble oligonucleotides, which are then degraded further into small acid-soluble oligonucleotides. In Vibrio vulnificus (strain CMCP6), this protein is Exodeoxyribonuclease 7 small subunit.